A 365-amino-acid chain; its full sequence is Aminomethyltransferase (365 aa).

This sequence belongs to the GcvT family. As to quaternary structure, the glycine cleavage system is composed of four proteins: P, T, L and H.

The catalysed reaction is N(6)-[(R)-S(8)-aminomethyldihydrolipoyl]-L-lysyl-[protein] + (6S)-5,6,7,8-tetrahydrofolate = N(6)-[(R)-dihydrolipoyl]-L-lysyl-[protein] + (6R)-5,10-methylene-5,6,7,8-tetrahydrofolate + NH4(+). Its function is as follows. The glycine cleavage system catalyzes the degradation of glycine. This Parafrankia sp. (strain EAN1pec) protein is Aminomethyltransferase.